The sequence spans 105 residues: MLTTTQDKFEDFEIEKTIGLVRGNTIRTKNIGYDLVASLRTIVGGEIPEYTKMMNESREEAFKRMIQEAQMLGADAVVGLRFGTSSVLPGSAEFLCYGTAVTLKK.

This sequence belongs to the UPF0145 family.

The sequence is that of UPF0145 protein Mevan_1624 from Methanococcus vannielii (strain ATCC 35089 / DSM 1224 / JCM 13029 / OCM 148 / SB).